The following is a 399-amino-acid chain: MAEAMELGKDPNGPTHSSTLFVREDGSSMSFYVRPSPAKRRLSTLILHGGGTLCRVQEPGAVLLAQPGEAAAEASGDFISTQYILDCVERNEKLELEAYRLGPAPAAYQAPETKPGVLAGGVAAAEPEPQSQAGRMVFTDADDVAIITYVKEHARSASSVTGNALWKAMEKSSLTQHSWQSMKDRYLKRLRGQEHKYLLGEAPVSPSSQKLKRKAEQDPEAADSGEPQNKRTPDLPEEEFEKEEIKENEAAVKKMLVEATREFEEIVVDESPDFEIHITMCDDDPCTPEEDSETQPDEEEEEEEKVSAPEVGAAIKIIRQLMEKFNLDLSTVTQAFLKNSGELEATSSFLESGQRADGYPIWSRQDDLDLQKDDEATRDALVKKFGAQNVARRIEFRKK.

A disordered region spans residues 1–21 (MAEAMELGKDPNGPTHSSTLF). Ala-2 carries the N-acetylalanine modification. The BRCT domain maps to 10–101 (DPNGPTHSST…EKLELEAYRL (92 aa)). A phosphoserine mark is found at Ser-36 and Ser-43. A Glycyl lysine isopeptide (Lys-Gly) (interchain with G-Cter in SUMO2) cross-link involves residue Lys-114. The Myb-like domain occupies 130 to 190 (QSQAGRMVFT…SMKDRYLKRL (61 aa)). Phosphoserine is present on residues Ser-156 and Ser-158. Residue Lys-196 forms a Glycyl lysine isopeptide (Lys-Gly) (interchain with G-Cter in SUMO2) linkage. 2 disordered regions span residues 199–245 (LGEA…KEEI) and 279–309 (TMCD…VSAP). Phosphoserine is present on residues Ser-205 and Ser-208. Glycyl lysine isopeptide (Lys-Gly) (interchain with G-Cter in SUMO2) cross-links involve residues Lys-210, Lys-214, and Lys-242. Acidic residues predominate over residues 281–304 (CDDDPCTPEEDSETQPDEEEEEEE). Lys-372 participates in a covalent cross-link: Glycyl lysine isopeptide (Lys-Gly) (interchain with G-Cter in SUMO2). The Nuclear localization signal signature appears at 383–399 (KKFGAQNVARRIEFRKK).

It belongs to the RAP1 family. Associates with the I-kappa-B-kinase (IKK) core complex, composed of CHUK, IKBKB and IKBKG. Homodimer. Component of the shelterin complex (telosome) composed of TERF1, TERF2, TINF2, TERF2IP ACD and POT1. Interacts with TERF2 (but not TERF1) with its C-terminus. Interacts with SLX4/BTBD12. Interacts with TERF2; the interaction is direct.

It localises to the nucleus. It is found in the cytoplasm. The protein resides in the chromosome. The protein localises to the telomere. Its function is as follows. Acts both as a regulator of telomere function and as a transcription regulator. Involved in the regulation of telomere length and protection as a component of the shelterin complex (telosome). In contrast to other components of the shelterin complex, it is dispensible for telomere capping and does not participate in the protection of telomeres against non-homologous end-joining (NHEJ)-mediated repair. Instead, it is required to negatively regulate telomere recombination and is essential for repressing homology-directed repair (HDR), which can affect telomere length. Does not bind DNA directly: recruited to telomeric double-stranded 5'-TTAGGG-3' repeats via its interaction with TERF2. Independently of its function in telomeres, also acts as a transcription regulator: recruited to extratelomeric 5'-TTAGGG-3' sites via its association with TERF2 or other factors, and regulates gene expression. When cytoplasmic, associates with the I-kappa-B-kinase (IKK) complex and acts as a regulator of the NF-kappa-B signaling by promoting IKK-mediated phosphorylation of RELA/p65, leading to activate expression of NF-kappa-B target genes. The chain is Telomeric repeat-binding factor 2-interacting protein 1 (TERF2IP) from Bos taurus (Bovine).